Here is a 136-residue protein sequence, read N- to C-terminus: Probable 5-hydroxyisourate hydrolase ZK697.8 (136 aa).

The N-terminal stretch at 1 to 19 (MIKFLLFLAIAAATVISNA) is a signal peptide. The substrate site is built by His-31, Arg-69, and Tyr-133.

This sequence belongs to the transthyretin family. 5-hydroxyisourate hydrolase subfamily. In terms of assembly, homotetramer.

It carries out the reaction 5-hydroxyisourate + H2O = 5-hydroxy-2-oxo-4-ureido-2,5-dihydro-1H-imidazole-5-carboxylate + H(+). Catalyzes the hydrolysis of 5-hydroxyisourate (HIU) to 2-oxo-4-hydroxy-4-carboxy-5-ureidoimidazoline (OHCU). The protein is Probable 5-hydroxyisourate hydrolase ZK697.8 of Caenorhabditis elegans.